The primary structure comprises 476 residues: Bifunctional protein GlmU (476 aa).

Residues methionine 1 to proline 235 form a pyrophosphorylase region. UDP-N-acetyl-alpha-D-glucosamine contacts are provided by residues lysine 23, glutamine 81, glycine 86–threonine 87, serine 108–aspartate 110, glycine 145, glutamate 160, and asparagine 233. Aspartate 110 serves as a coordination point for Mg(2+). Position 233 (asparagine 233) interacts with Mg(2+). Residues alanine 236 to glutamine 256 are linker. Positions glycine 257–glycine 476 are N-acetyltransferase. UDP-N-acetyl-alpha-D-glucosamine is bound by residues arginine 351 and lysine 369. Catalysis depends on histidine 381, which acts as the Proton acceptor. Tyrosine 384 and asparagine 395 together coordinate UDP-N-acetyl-alpha-D-glucosamine. Residues alanine 398, asparagine 404–tyrosine 405, serine 423, glycine 441, and arginine 458 each bind acetyl-CoA.

In the N-terminal section; belongs to the N-acetylglucosamine-1-phosphate uridyltransferase family. It in the C-terminal section; belongs to the transferase hexapeptide repeat family. Homotrimer. It depends on Mg(2+) as a cofactor.

It localises to the cytoplasm. The catalysed reaction is alpha-D-glucosamine 1-phosphate + acetyl-CoA = N-acetyl-alpha-D-glucosamine 1-phosphate + CoA + H(+). It catalyses the reaction N-acetyl-alpha-D-glucosamine 1-phosphate + UTP + H(+) = UDP-N-acetyl-alpha-D-glucosamine + diphosphate. Its pathway is nucleotide-sugar biosynthesis; UDP-N-acetyl-alpha-D-glucosamine biosynthesis; N-acetyl-alpha-D-glucosamine 1-phosphate from alpha-D-glucosamine 6-phosphate (route II): step 2/2. It participates in nucleotide-sugar biosynthesis; UDP-N-acetyl-alpha-D-glucosamine biosynthesis; UDP-N-acetyl-alpha-D-glucosamine from N-acetyl-alpha-D-glucosamine 1-phosphate: step 1/1. It functions in the pathway bacterial outer membrane biogenesis; LPS lipid A biosynthesis. In terms of biological role, catalyzes the last two sequential reactions in the de novo biosynthetic pathway for UDP-N-acetylglucosamine (UDP-GlcNAc). The C-terminal domain catalyzes the transfer of acetyl group from acetyl coenzyme A to glucosamine-1-phosphate (GlcN-1-P) to produce N-acetylglucosamine-1-phosphate (GlcNAc-1-P), which is converted into UDP-GlcNAc by the transfer of uridine 5-monophosphate (from uridine 5-triphosphate), a reaction catalyzed by the N-terminal domain. This chain is Bifunctional protein GlmU, found in Acidovorax sp. (strain JS42).